The chain runs to 202 residues: Protein Thf1 (202 aa).

Residues 174-202 (IYKSSILKMEQAKELLQEAKIKDKKEKKK) adopt a coiled-coil conformation.

It belongs to the THF1 family.

May be involved in photosynthetic membrane biogenesis. The polypeptide is Protein Thf1 (Prochlorococcus marinus subsp. pastoris (strain CCMP1986 / NIES-2087 / MED4)).